The primary structure comprises 456 residues: Signal recognition particle receptor FtsY (456 aa).

The segment covering 1 to 26 has biased composition (basic and acidic residues); sequence MFDGLKKKLNRFRNDVEETAEEKAEA. Residues 1-163 are disordered; it reads MFDGLKKKLN…DEDDSSGPGR (163 aa). Acidic residues predominate over residues 27–39; it reads AADEAESDADAEA. A compositionally biased stretch (low complexity) spans 40–62; that stretch reads ESAPADTDNAAVEPEASEPAAAD. Over residues 63-81 the composition is skewed to acidic residues; it reads PDADAVGDADAGSEADAVD. Low complexity predominate over residues 82–97; that stretch reads AADAPADAESSSAAVE. Residues 112-134 show a composition bias toward acidic residues; that stretch reads PDSEVDAGADTGDEPSGEPTADE. GTP is bound by residues 265–272, 347–351, and 405–408; these read GINGVGKT, DTAGR, and TKAD.

It belongs to the GTP-binding SRP family. FtsY subfamily. As to quaternary structure, part of the signal recognition particle protein translocation system, which is composed of SRP and FtsY.

The protein resides in the cell membrane. It localises to the cytoplasm. The enzyme catalyses GTP + H2O = GDP + phosphate + H(+). Functionally, involved in targeting and insertion of nascent membrane proteins into the cytoplasmic membrane. Acts as a receptor for the complex formed by the signal recognition particle (SRP) and the ribosome-nascent chain (RNC). This is Signal recognition particle receptor FtsY from Haloferax volcanii (strain ATCC 29605 / DSM 3757 / JCM 8879 / NBRC 14742 / NCIMB 2012 / VKM B-1768 / DS2) (Halobacterium volcanii).